A 144-amino-acid polypeptide reads, in one-letter code: Large ribosomal subunit protein uL13 (144 aa).

The protein belongs to the universal ribosomal protein uL13 family. Part of the 50S ribosomal subunit.

In terms of biological role, this protein is one of the early assembly proteins of the 50S ribosomal subunit, although it is not seen to bind rRNA by itself. It is important during the early stages of 50S assembly. The polypeptide is Large ribosomal subunit protein uL13 (Clostridium novyi (strain NT)).